Reading from the N-terminus, the 164-residue chain is UPF0304 protein PM1500 (164 aa).

The protein belongs to the UPF0304 family.

The sequence is that of UPF0304 protein PM1500 from Pasteurella multocida (strain Pm70).